The following is a 464-amino-acid chain: Siroheme synthase (464 aa).

Residues 1–203 (MEYLPLFHNL…GQGAEAERLL (203 aa)) are precorrin-2 dehydrogenase /sirohydrochlorin ferrochelatase. NAD(+) contacts are provided by residues 22–23 (EI) and 43–44 (PE). Ser-128 is modified (phosphoserine). Positions 216-464 (GEVYLVGAGP…AWFEGAQSEV (249 aa)) are uroporphyrinogen-III C-methyltransferase. Pro-225 is an S-adenosyl-L-methionine binding site. Asp-248 serves as the catalytic Proton acceptor. Lys-270 (proton donor) is an active-site residue. Residues 301 to 303 (GGD), Ile-306, 331 to 332 (TA), Met-383, and Gly-412 contribute to the S-adenosyl-L-methionine site.

This sequence in the N-terminal section; belongs to the precorrin-2 dehydrogenase / sirohydrochlorin ferrochelatase family. In the C-terminal section; belongs to the precorrin methyltransferase family.

It carries out the reaction uroporphyrinogen III + 2 S-adenosyl-L-methionine = precorrin-2 + 2 S-adenosyl-L-homocysteine + H(+). It catalyses the reaction precorrin-2 + NAD(+) = sirohydrochlorin + NADH + 2 H(+). The enzyme catalyses siroheme + 2 H(+) = sirohydrochlorin + Fe(2+). It participates in cofactor biosynthesis; adenosylcobalamin biosynthesis; precorrin-2 from uroporphyrinogen III: step 1/1. It functions in the pathway cofactor biosynthesis; adenosylcobalamin biosynthesis; sirohydrochlorin from precorrin-2: step 1/1. The protein operates within porphyrin-containing compound metabolism; siroheme biosynthesis; precorrin-2 from uroporphyrinogen III: step 1/1. Its pathway is porphyrin-containing compound metabolism; siroheme biosynthesis; siroheme from sirohydrochlorin: step 1/1. It participates in porphyrin-containing compound metabolism; siroheme biosynthesis; sirohydrochlorin from precorrin-2: step 1/1. In terms of biological role, multifunctional enzyme that catalyzes the SAM-dependent methylations of uroporphyrinogen III at position C-2 and C-7 to form precorrin-2 via precorrin-1. Then it catalyzes the NAD-dependent ring dehydrogenation of precorrin-2 to yield sirohydrochlorin. Finally, it catalyzes the ferrochelation of sirohydrochlorin to yield siroheme. The protein is Siroheme synthase of Pseudomonas fluorescens (strain ATCC BAA-477 / NRRL B-23932 / Pf-5).